Reading from the N-terminus, the 511-residue chain is MFIESFKVESPNVKYTENEIHSVYDYETTEVVHEKTVNGTYQWIVKPKTVKYDFKTDIRVPKLGVMLVGLGGNNGSTLTAGVIANKEGISWATKDKVQQANYFGSLTQASSIRVGSFNGEEIYAPFKSLLPMVNPDDVVFGGWDISDMNLADAMARARVLDIDLQKQLRPYMENIVPLPGIFDPDFIAANQGSRANHVIKGTKKEQVDHIIKDMREFKEKNKVDKVVVLWTANTERYSNVVVGMNDTMENLMESVDRDEAEISPSTLYAIACVLEGIPFINGSPQNTFVPGLIDMAIRNNVLIGGDDFKSGQTKMKSVLVDFLVGAGIKPTSIVSYNHLGNNDGMNLSAPQTFRSKEISKSNVVDDMVASNGILFEPGEHPDHVVVIKYVPYVADSKRAMDEYTSEIFMGGKNTIVMHNTCEDSLLAAPIILDLVLLAELSTRIQFKSEGEGKFHSFHPVATILSYLTKAPLVPPGTPVINALSKQRAMLENIMRACVGLAPENNMIMEFK.

Positions 71, 72, 73, 74, 144, 181, 191, 194, 231, 232, 233, 234, 282, 283, 307, 310, 341, 342, 343, 356, 394, 395, 423, and 424 each coordinate NAD(+).

It belongs to the myo-inositol 1-phosphate synthase family. Homotrimer or homotetramer. Interacts with ATXR5 and ATXR6. Requires NAD(+) as cofactor. In terms of tissue distribution, expressed in siliques, leaves, roots, seed endosperm, but not in embryos. Highest expression in leaves, but restricted to vascular tissue in older leaves.

It localises to the cytoplasm. The protein localises to the cytosol. The protein resides in the nucleus. It catalyses the reaction D-glucose 6-phosphate = 1D-myo-inositol 3-phosphate. It functions in the pathway polyol metabolism; myo-inositol biosynthesis; myo-inositol from D-glucose 6-phosphate: step 1/2. Functionally, key enzyme in myo-inositol biosynthesis pathway that catalyzes the conversion of glucose 6-phosphate to 1-myo-inositol 1-phosphate in a NAD-dependent manner. Catalyzes the majority of myo-inositol synthesis required for plant growth and development. Acts as a repressor of programmed cell death and protects plant cells against cell death under high light intensity or long days. Controls its own transcription by inhibiting ATXR6 activity. Reduces the deposition of inhibitory histone marks on its own promoter. The sequence is that of Inositol-3-phosphate synthase isozyme 1 (IPS1) from Arabidopsis thaliana (Mouse-ear cress).